Here is a 332-residue protein sequence, read N- to C-terminus: dTDP-3,4-didehydro-2,6-dideoxy-alpha-D-glucose 3-reductase (332 aa).

17–23 (CADIAWR) lines the NADP(+) pocket. Substrate is bound at residue R24. NADP(+) contacts are provided by residues 42-43 (SR), Y63, L79, and H84. Residue K102 is the Proton donor of the active site. Residues R170 and D182 each coordinate NADP(+). Substrate contacts are provided by Y240 and T260.

Belongs to the Gfo/Idh/MocA family. As to quaternary structure, homotetramer; dimer of dimers.

The catalysed reaction is dTDP-4-dehydro-2,6-dideoxy-alpha-D-glucose + NADP(+) = dTDP-3,4-didehydro-2,6-dideoxy-alpha-D-glucose + NADPH + H(+). It participates in antibiotic biosynthesis. Functionally, involved in the biosynthesis of L-digitoxose, an unusual dideoxysugar attached to various pharmacologically active natural products, including the antitumor antibiotic tetrocarcin A, and the antibiotics kijanimicin and jadomycin B. Catalyzes the reduction of the C-3 keto moiety of dTDP-3,4-diketo-2,6-dideoxy-alpha-D-glucose to yield dTDP-4-keto-2,6-dideoxy-alpha-D-glucose. Also able to reduce dTDP-3-keto-6-deoxy-D-galactose and dTDP-3-keto-6-deoxy-D-glucose to yield dTDP-fucose and dTDP-quinovose, respectively. In Actinomadura kijaniata, this protein is dTDP-3,4-didehydro-2,6-dideoxy-alpha-D-glucose 3-reductase.